Consider the following 198-residue polypeptide: Holliday junction branch migration complex subunit RuvA (198 aa).

Positions 1–64 (MYEYIKGEYM…EDFIGLYGFE (64 aa)) are domain I. Positions 65 to 143 (SLEELDMFKL…SDELLNCIDE (79 aa)) are domain II. The flexible linker stretch occupies residues 144-154 (FDDVTQDNSLA). The domain III stretch occupies residues 154-198 (ALSEALSALISLGYTEKEAEKVLKDVDKSESVENIIKSALVKLMG).

This sequence belongs to the RuvA family. In terms of assembly, homotetramer. Forms an RuvA(8)-RuvB(12)-Holliday junction (HJ) complex. HJ DNA is sandwiched between 2 RuvA tetramers; dsDNA enters through RuvA and exits via RuvB. An RuvB hexamer assembles on each DNA strand where it exits the tetramer. Each RuvB hexamer is contacted by two RuvA subunits (via domain III) on 2 adjacent RuvB subunits; this complex drives branch migration. In the full resolvosome a probable DNA-RuvA(4)-RuvB(12)-RuvC(2) complex forms which resolves the HJ.

The protein resides in the cytoplasm. Its function is as follows. The RuvA-RuvB-RuvC complex processes Holliday junction (HJ) DNA during genetic recombination and DNA repair, while the RuvA-RuvB complex plays an important role in the rescue of blocked DNA replication forks via replication fork reversal (RFR). RuvA specifically binds to HJ cruciform DNA, conferring on it an open structure. The RuvB hexamer acts as an ATP-dependent pump, pulling dsDNA into and through the RuvAB complex. HJ branch migration allows RuvC to scan DNA until it finds its consensus sequence, where it cleaves and resolves the cruciform DNA. This is Holliday junction branch migration complex subunit RuvA from Clostridium botulinum (strain Alaska E43 / Type E3).